We begin with the raw amino-acid sequence, 687 residues long: Epithelial splicing regulatory protein 1 (687 aa).

RRM domains are found at residues 226 to 303, 327 to 407, and 446 to 526; these read TIIR…KATG, VIVR…RSTA, and DCIR…QCSA.

This sequence belongs to the ESRP family.

Its subcellular location is the nucleus. MRNA splicing factor that regulates the formation of epithelial cell-specific isoforms. Specifically regulates the expression of FGFR2-IIIb, an epithelial cell-specific isoform of fgfr2. Acts by directly binding specific sequences in mRNAs. Binds the GU-rich sequence motifs in the ISE/ISS-3, a cis-element regulatory region present in the mRNA of fgfr2. This chain is Epithelial splicing regulatory protein 1 (esrp1), found in Xenopus tropicalis (Western clawed frog).